The following is a 287-amino-acid chain: Deoxyuridine 5'-triphosphate nucleotidohydrolase (287 aa).

173–175 (RSG) serves as a coordination point for substrate. A compositionally biased stretch (low complexity) spans 264–275 (SSSKDTSDSQMS). A disordered region spans residues 264–287 (SSSKDTSDSQMSRGDAGLGSSGLM).

It belongs to the dUTPase family. Mg(2+) serves as cofactor.

It catalyses the reaction dUTP + H2O = dUMP + diphosphate + H(+). Its function is as follows. Involved in nucleotide metabolism: produces dUMP, the immediate precursor of thymidine nucleotides and decreases the intracellular concentration of dUTP to avoid uracil incorporation into viral DNA. The chain is Deoxyuridine 5'-triphosphate nucleotidohydrolase from Saimiriine herpesvirus 2 (strain 11) (SaHV-2).